Consider the following 924-residue polypeptide: Translation initiation factor IF-2 (924 aa).

A disordered region spans residues 118-325 (PSTAHREELA…QAPVVGGVRL (208 aa)). Composition is skewed to pro residues over residues 150–173 (APHP…PGGR) and 192–201 (IPRPPAPRPS). Over residues 202–212 (ASPSSMSPRPG) the composition is skewed to low complexity. Residues 229–295 (RPGGGRPGAP…GAAGAFGRPG (67 aa)) show a composition bias toward gly residues. Positions 299 to 308 (RRGRKSKRQK) are enriched in basic residues. Residues 420–591 (VRPPVVTVMG…AVLLTADAAL (172 aa)) enclose the tr-type G domain. Positions 429-436 (GHVDHGKT) are G1. 429-436 (GHVDHGKT) lines the GTP pocket. A G2 region spans residues 454 to 458 (GITQH). Residues 479 to 482 (DTPG) are G3. GTP contacts are provided by residues 479-483 (DTPGH) and 533-536 (NKID). Residues 533–536 (NKID) are G4. Residues 569 to 571 (SAK) form a G5 region.

Belongs to the TRAFAC class translation factor GTPase superfamily. Classic translation factor GTPase family. IF-2 subfamily.

It is found in the cytoplasm. Its function is as follows. One of the essential components for the initiation of protein synthesis. Protects formylmethionyl-tRNA from spontaneous hydrolysis and promotes its binding to the 30S ribosomal subunits. Also involved in the hydrolysis of GTP during the formation of the 70S ribosomal complex. This is Translation initiation factor IF-2 from Mycobacterium leprae (strain Br4923).